A 366-amino-acid polypeptide reads, in one-letter code: Putative F-box protein At1g26515 (366 aa).

A disordered region spans residues 1–20 (MKTRSKKTKTENNQEKSKEK). Positions 8-20 (TKTENNQEKSKEK) are enriched in basic and acidic residues. The region spanning 20 to 66 (KNKFDQLPLDLEIEIFRRLPLKSVARFLTLSKSCAATIRSPSFITSF) is the F-box domain.

The polypeptide is Putative F-box protein At1g26515 (Arabidopsis thaliana (Mouse-ear cress)).